Reading from the N-terminus, the 794-residue chain is uncharacterized protein (794 aa).

The next 9 membrane-spanning stretches (helical) occupy residues 34–54 (FSASTTTAALMSTLWIIVFAV), 67–87 (ITAALIHITSIPLGIGIAHLI), 99–119 (MLADVLLTPDFWVFGVAAFAS), 132–152 (LFLFTITLTLLLYTGTLADVT), 257–277 (VGPSVANLIPLILTVVLAMGL), 283–303 (LAWILAVLAQLISIAVLMFQL), 315–335 (WSVNAFSVIVPWLVALAVLVF), 353–373 (LGALMVTWLATAALWILATLF), and 421–441 (WTGTLFWLVVAATLYHLLMGV).

It is found in the cell membrane. This is an uncharacterized protein from Corynebacterium glutamicum (strain ATCC 13032 / DSM 20300 / JCM 1318 / BCRC 11384 / CCUG 27702 / LMG 3730 / NBRC 12168 / NCIMB 10025 / NRRL B-2784 / 534).